The primary structure comprises 272 residues: Endogenous Bornavirus-like nucleoprotein 2 (272 aa).

Residues 48–70 are disordered; that stretch reads MSHLRKDSQPSSPGDDAMDRSGL.

Functionally, may act as an RNA-binding protein. The C-terminal region is highly homologous to the bornavirus nucleocapsid N protein that binds viral RNA and oligomerizes. The viral protein also possesses a nuclear import and a nuclear export signal. These 2 signals seem absent in EBLN-2 supporting an unrelated function in Human. The chain is Endogenous Bornavirus-like nucleoprotein 2 (EBLN2) from Homo sapiens (Human).